The following is a 194-amino-acid chain: tRNA (pseudouridine(54)-N(1))-methyltransferase (194 aa).

Residue Leu-125 coordinates S-adenosyl-L-methionine.

The protein belongs to the methyltransferase superfamily. TrmY family. In terms of assembly, homodimer.

The protein resides in the cytoplasm. The catalysed reaction is pseudouridine(54) in tRNA + S-adenosyl-L-methionine = N(1)-methylpseudouridine(54) in tRNA + S-adenosyl-L-homocysteine + H(+). In terms of biological role, specifically catalyzes the N1-methylation of pseudouridine at position 54 (Psi54) in tRNAs. The protein is tRNA (pseudouridine(54)-N(1))-methyltransferase of Methanospirillum hungatei JF-1 (strain ATCC 27890 / DSM 864 / NBRC 100397 / JF-1).